The chain runs to 599 residues: Elongation factor 4 (599 aa).

Positions Ser-5–Glu-187 constitute a tr-type G domain. GTP contacts are provided by residues Asp-17 to Thr-22 and Asn-134 to Asp-137.

It belongs to the TRAFAC class translation factor GTPase superfamily. Classic translation factor GTPase family. LepA subfamily.

The protein localises to the cell inner membrane. The catalysed reaction is GTP + H2O = GDP + phosphate + H(+). In terms of biological role, required for accurate and efficient protein synthesis under certain stress conditions. May act as a fidelity factor of the translation reaction, by catalyzing a one-codon backward translocation of tRNAs on improperly translocated ribosomes. Back-translocation proceeds from a post-translocation (POST) complex to a pre-translocation (PRE) complex, thus giving elongation factor G a second chance to translocate the tRNAs correctly. Binds to ribosomes in a GTP-dependent manner. The chain is Elongation factor 4 from Pseudomonas putida (strain ATCC 47054 / DSM 6125 / CFBP 8728 / NCIMB 11950 / KT2440).